The sequence spans 282 residues: 40S small subunit processome assembly factor 1 (282 aa).

2 disordered regions span residues 27 to 98 (YDLG…SEVP) and 121 to 143 (FHSRSEKRKPKSEEDKPAKNKTK). Positions 48 to 59 (KRDSETVADRAA) are enriched in basic and acidic residues. A phosphoserine mark is found at Ser67 and Ser75. The segment covering 89-98 (SAPAAPSEVP) has biased composition (low complexity). The segment covering 131-143 (KSEEDKPAKNKTK) has biased composition (basic and acidic residues). Lys173 carries the post-translational modification N6-acetyllysine. Positions 208–226 (EKRTSMEEEKRAAQETDIF) are enriched in basic and acidic residues. The tract at residues 208–254 (EKRTSMEEEKRAAQETDIFKRKKRKGRSQEDRRSKKLAPSILSSGRA) is disordered. The residue at position 268 (Ser268) is a Phosphoserine.

In terms of assembly, part of the small subunit (SSU) processome, composed of more than 70 proteins and the RNA chaperone small nucleolar RNA (snoRNA) U3.

The protein resides in the chromosome. It is found in the nucleus. It localises to the nucleolus. In terms of biological role, part of the small subunit (SSU) processome, first precursor of the small eukaryotic ribosomal subunit. During the assembly of the SSU processome in the nucleolus, many ribosome biogenesis factors, an RNA chaperone and ribosomal proteins associate with the nascent pre-rRNA and work in concert to generate RNA folding, modifications, rearrangements and cleavage as well as targeted degradation of pre-ribosomal RNA by the RNA exosome. Prevents helicase DHX37 to be recruited before post-A1 state. The sequence is that of 40S small subunit processome assembly factor 1 from Rattus norvegicus (Rat).